The chain runs to 106 residues: Stress-responsive protein 1 (106 aa).

The protein resides in the mitochondrion. Stress-responsive protein that may play a role in regulation of cell cycle. In Schizosaccharomyces pombe (strain 972 / ATCC 24843) (Fission yeast), this protein is Stress-responsive protein 1 (sro1).